Consider the following 249-residue polypeptide: Globin-like protein 9 (249 aa).

The interval Thr-20–Arg-43 is disordered. One can recognise a Globin domain in the interval Ser-52–Glu-205. Residues His-116 and His-148 each contribute to the heme site.

Belongs to the globin family.

The polypeptide is Globin-like protein 9 (glb-9) (Caenorhabditis elegans).